A 175-amino-acid chain; its full sequence is CASP-like protein 2C1 (175 aa).

Residues 1–7 (MVKLRET) are Cytoplasmic-facing. The helical transmembrane segment at 8 to 28 (EVILRLCIVFFLLLTSCLIGL) threads the bilayer. Topologically, residues 29-45 (DSQTKEIAYIHKNVSFR) are extracellular. N41 is a glycosylation site (N-linked (GlcNAc...) asparagine). Residues 46-66 (YLLALEAELYIDVVVAAYNLV) traverse the membrane as a helical segment. Topologically, residues 67-91 (QLGLGWYNVEQKTSNPKWFSYLLDQ) are cytoplasmic. The chain crosses the membrane as a helical span at residues 92-112 (TAAYVVFAGTSAAAQHSLLVV). Residues 113-136 (TGSRELQWMKWCYKFTRFCFQMGS) are Extracellular-facing. Residues 137–157 (AIILNYIAAALMVLLSSISAF) form a helical membrane-spanning segment. The Cytoplasmic segment spans residues 158–175 (NLFRLYSPKRFFRFKSSS).

This sequence belongs to the Casparian strip membrane proteins (CASP) family. Homodimer and heterodimers.

It is found in the cell membrane. The sequence is that of CASP-like protein 2C1 from Arabidopsis thaliana (Mouse-ear cress).